A 308-amino-acid polypeptide reads, in one-letter code: Methionyl-tRNA formyltransferase (308 aa).

110–113 is a binding site for (6S)-5,6,7,8-tetrahydrofolate; that stretch reads SLLP.

The protein belongs to the Fmt family.

The catalysed reaction is L-methionyl-tRNA(fMet) + (6R)-10-formyltetrahydrofolate = N-formyl-L-methionyl-tRNA(fMet) + (6S)-5,6,7,8-tetrahydrofolate + H(+). Its function is as follows. Attaches a formyl group to the free amino group of methionyl-tRNA(fMet). The formyl group appears to play a dual role in the initiator identity of N-formylmethionyl-tRNA by promoting its recognition by IF2 and preventing the misappropriation of this tRNA by the elongation apparatus. This Neisseria gonorrhoeae (strain ATCC 700825 / FA 1090) protein is Methionyl-tRNA formyltransferase.